The sequence spans 26 residues: uncharacterized protein (26 aa).

Post-translationally, phosphorylated by YfhK.

Probable member of a two-component regulatory system YfhA/YfhK. This is an uncharacterized protein from Klebsiella oxytoca.